The primary structure comprises 103 residues: UPF0145 protein PTH_2690 (103 aa).

The protein belongs to the UPF0145 family.

The chain is UPF0145 protein PTH_2690 from Pelotomaculum thermopropionicum (strain DSM 13744 / JCM 10971 / SI).